The primary structure comprises 338 residues: Fructose-1,6-bisphosphatase class 1 1 (338 aa).

Residues Glu-91, Asp-113, Leu-115, and Asp-116 each coordinate Mg(2+). Residues 116 to 119, Asn-208, and Lys-274 each bind substrate; that span reads DGSS. Glu-280 is a binding site for Mg(2+).

The protein belongs to the FBPase class 1 family. As to quaternary structure, homotetramer. Requires Mg(2+) as cofactor.

It localises to the cytoplasm. The catalysed reaction is beta-D-fructose 1,6-bisphosphate + H2O = beta-D-fructose 6-phosphate + phosphate. The protein operates within carbohydrate biosynthesis; gluconeogenesis. In Cupriavidus metallidurans (strain ATCC 43123 / DSM 2839 / NBRC 102507 / CH34) (Ralstonia metallidurans), this protein is Fructose-1,6-bisphosphatase class 1 1.